We begin with the raw amino-acid sequence, 238 residues long: MRPADRAAQQVRPLTLTRNYTKHAEGSVLVEFGDTKVLCTATVEEGVPRFLKGQGQGWITAEYGMLPRSTHSRNAREAAKGKQGGRTLEIQRLIARSLRAAVDLKKLGEFTITLDCDVLQADGGTRTASISGACVALADALNKLVASGKLKANPMKGLVAAVSVGIVKGEALCDLEYVEDSAAETDMNVVMMEDGRMIEVQGTAEGEPFSHEELLALLDLARGGIETIFQAQKAALES.

Phosphate contacts are provided by residues Arg86 and 124–126 (GTR).

The protein belongs to the RNase PH family. As to quaternary structure, homohexameric ring arranged as a trimer of dimers.

It carries out the reaction tRNA(n+1) + phosphate = tRNA(n) + a ribonucleoside 5'-diphosphate. Its function is as follows. Phosphorolytic 3'-5' exoribonuclease that plays an important role in tRNA 3'-end maturation. Removes nucleotide residues following the 3'-CCA terminus of tRNAs; can also add nucleotides to the ends of RNA molecules by using nucleoside diphosphates as substrates, but this may not be physiologically important. Probably plays a role in initiation of 16S rRNA degradation (leading to ribosome degradation) during starvation. In Yersinia pseudotuberculosis serotype O:1b (strain IP 31758), this protein is Ribonuclease PH.